The chain runs to 151 residues: Ribosomal RNA large subunit methyltransferase H (151 aa).

S-adenosyl-L-methionine contacts are provided by residues leucine 70, glycine 99, and leucine 118–phenylalanine 123.

The protein belongs to the RNA methyltransferase RlmH family. Homodimer.

It localises to the cytoplasm. The catalysed reaction is pseudouridine(1915) in 23S rRNA + S-adenosyl-L-methionine = N(3)-methylpseudouridine(1915) in 23S rRNA + S-adenosyl-L-homocysteine + H(+). Specifically methylates the pseudouridine at position 1915 (m3Psi1915) in 23S rRNA. This is Ribosomal RNA large subunit methyltransferase H from Gloeobacter violaceus (strain ATCC 29082 / PCC 7421).